Reading from the N-terminus, the 859-residue chain is Cadherin-related family member 1 (859 aa).

The first 21 residues, 1 to 21, serve as a signal peptide directing secretion; it reads MRRGPRVALVLGLLRIYLAQA. At 22-701 the chain is on the extracellular side; that stretch reads NFAPHFFDNG…LIQTKDNPMK (680 aa). 6 consecutive Cadherin domains span residues 36 to 135, 136 to 247, 248 to 354, 360 to 473, 474 to 577, and 569 to 691; these read NGNM…APRF, IQEP…APIF, VGTP…PPTF, PQNK…VPKF, TSHY…YPQF, and DVND…MAAF. Asn-58 and Asn-89 each carry an N-linked (GlcNAc...) asparagine glycan. The N-linked (GlcNAc...) asparagine glycan is linked to Asn-288. A helical transmembrane segment spans residues 702 to 722; it reads AVGVLAGVMAIVVAITVLIST. Over 723 to 859 the chain is Cytoplasmic; the sequence is ATFWRNKKSN…KKSLDNKAYI (137 aa). The interval 793 to 838 is disordered; sequence PALPPPPKMASSMVAQQTVPTVSGSLTPQPSPQLPTPKTLGGPVQS. Residues 805–816 show a composition bias toward polar residues; it reads MVAQQTVPTVSG.

In terms of assembly, interacts with PROM1. In terms of processing, undergoes proteolytic cleavage; produces a soluble 95 kDa N-terminal fragment and a 25 kDa cell-associated C-terminal fragment. As to expression, expressed in cone and rod photoreceptor cells (at protein level). Expressed in photoreceptor cells of the outer nuclear layer of the retina. Expressed in mitral and tufted cells in the olfactory bulb.

It is found in the cell membrane. Its function is as follows. Potential calcium-dependent cell-adhesion protein. May be required for the structural integrity of the outer segment (OS) of photoreceptor cells. This chain is Cadherin-related family member 1 (Cdhr1), found in Mus musculus (Mouse).